The primary structure comprises 86 residues: Small ribosomal subunit protein uS17 (86 aa).

This sequence belongs to the universal ribosomal protein uS17 family. In terms of assembly, part of the 30S ribosomal subunit.

One of the primary rRNA binding proteins, it binds specifically to the 5'-end of 16S ribosomal RNA. The chain is Small ribosomal subunit protein uS17 from Lactococcus lactis subsp. cremoris (strain SK11).